The sequence spans 126 residues: Small ribosomal subunit protein uS8 (126 aa).

Belongs to the universal ribosomal protein uS8 family. In terms of assembly, part of the 30S ribosomal subunit. Contacts proteins S5 and S12.

Its function is as follows. One of the primary rRNA binding proteins, it binds directly to 16S rRNA central domain where it helps coordinate assembly of the platform of the 30S subunit. The chain is Small ribosomal subunit protein uS8 from Desulfovibrio desulfuricans (strain ATCC 27774 / DSM 6949 / MB).